A 304-amino-acid polypeptide reads, in one-letter code: Acetaldehyde dehydrogenase (304 aa).

The active-site Acyl-thioester intermediate is cysteine 131. NAD(+) is bound by residues 162-170 (SAGPGTRKN) and asparagine 273.

Belongs to the acetaldehyde dehydrogenase family.

The catalysed reaction is acetaldehyde + NAD(+) + CoA = acetyl-CoA + NADH + H(+). The sequence is that of Acetaldehyde dehydrogenase from Polaromonas naphthalenivorans (strain CJ2).